We begin with the raw amino-acid sequence, 897 residues long: Probable basic-leucine zipper transcription factor R (897 aa).

Disordered stretches follow at residues 38–88 (DDNI…NIET) and 128–198 (YQQR…NSNS). The span at 44–75 (NNNNNNNNNNNNNNNNNNNNNNNNNNNNNNNN) shows a compositional bias: low complexity. Residues 76–88 (IGSPQIMNENIET) show a composition bias toward polar residues. The stretch at 94-137 (QYLERLQSIQQQQHQCQTQIQQQLQNYQQQYEDQYQQRQQQYQD) forms a coiled coil. Low complexity predominate over residues 128–140 (YQQRQQQYQDQYQ). The span at 141–157 (KPYSSPPLNFNSIPPIT) shows a compositional bias: polar residues. Low complexity predominate over residues 158-198 (NNNNNNNNNNNNNNNNNNSNSNSNSNSNSNSNSNSNSNSNS). 2 coiled-coil regions span residues 228–258 (LQQQ…QQQQ) and 330–407 (QQLQ…QQQQ). Positions 461-516 (LQLPTPFYSPQQQQQQHTPISSFIPPPSLPSSPPSPPSPPSPPPQQQQQQQQQQQQ) are disordered. Positions 484–505 (IPPPSLPSSPPSPPSPPSPPPQ) are enriched in pro residues. Residues 506 to 516 (QQQQQQQQQQQ) show a composition bias toward low complexity. Residues 557–620 (ESKESIKKYN…SIEMMRMEPE (64 aa)) enclose the bZIP domain. A basic motif region spans residues 559 to 564 (KESIKK). Positions 569-576 (IASRNYRL) are leucine-zipper.

It belongs to the bZIP family.

It is found in the nucleus. In terms of biological role, probable transcriptional regulator. This is Probable basic-leucine zipper transcription factor R (bzpR) from Dictyostelium discoideum (Social amoeba).